The following is a 405-amino-acid chain: Scarecrow-like protein 23 (405 aa).

Residues 1 to 20 (MTTKRIDRDLPSSDDPSSAK) are disordered. The GRAS domain maps to 31 to 400 (ENDGAAAIKL…LSLLTASAWK (370 aa)). Residues 38–102 (IKLLSLLLQC…ISSYLSGACS (65 aa)) form a leucine repeat I (LRI) region. The LxCxE motif motif lies at 45–49 (LQCAE). Residues 121–186 (LQTYNSVSPL…RKLRSIRITG (66 aa)) form a VHIID region. A VHIID motif is present at residues 152 to 156 (VHIID). A leucine repeat II (LRII) region spans residues 196–228 (STGRRLADFASSLNLPFEFHPIEGIIGNLIDPS). The interval 238 to 327 (VVVHWMQHRL…QIVLGTEIRN (90 aa)) is PFYRE. Residues 330–400 (AHGGGRRKRM…LSLLTASAWK (71 aa)) form an SAW region.

Belongs to the GRAS family. Interacts with SHR. In terms of tissue distribution, expressed in seedlings, cotyledons, shoot apex, leaves and flowers.

It is found in the nucleus. Probable transcription factor involved in plant development. This Arabidopsis thaliana (Mouse-ear cress) protein is Scarecrow-like protein 23 (SCL23).